The sequence spans 254 residues: RxLR effector protein CRE5 (254 aa).

A signal peptide spans 1-19 (MQTIQLIIFVAFVLSRAAA). N-linked (GlcNAc...) asparagine glycosylation occurs at N49. The short motif at 53-63 (RSLRQHEGEDR) is the RxLR-dEER element. Positions 191-254 (SRWLSAGVVT…MEEGGVCRAL (64 aa)) constitute a Nudix hydrolase domain. The Nudix box signature appears at 228-249 (GGWDRGEKIKKAALREVMEEGG).

The protein in the N-terminal section; belongs to the RxLR effector family. This sequence in the C-terminal section; belongs to the Nudix hydrolase family.

It is found in the secreted. The protein localises to the host cytoplasm. The protein resides in the host nucleus. It localises to the host nucleolus. Effector that is involved in host plant infection. Contributes to virulence during the early infection stage, by inhibiting plant defense responses induced by both PAMP-triggered immunity (PTI) and effector-triggered immunity (ETI). In Phytophthora infestans (strain T30-4) (Potato late blight agent), this protein is RxLR effector protein CRE5.